The following is a 610-amino-acid chain: UvrABC system protein C (610 aa).

Residues 16-94 (SQPGVYRMYD…IKLYQPRYNV (79 aa)) form the GIY-YIG domain. A UVR domain is found at 204–239 (DQVLTQLIARMEKASQDLAFEEAARIRDQIQAVRRV).

The protein belongs to the UvrC family. In terms of assembly, interacts with UvrB in an incision complex.

It is found in the cytoplasm. Functionally, the UvrABC repair system catalyzes the recognition and processing of DNA lesions. UvrC both incises the 5' and 3' sides of the lesion. The N-terminal half is responsible for the 3' incision and the C-terminal half is responsible for the 5' incision. The chain is UvrABC system protein C from Salmonella enteritidis PT4 (strain P125109).